Here is a 219-residue protein sequence, read N- to C-terminus: Pollen-specific protein SF3 (219 aa).

LIM zinc-binding domains lie at 9–109 and 110–167; these read QKCT…TRDK and CNAC…QLFK. Residues 181 to 219 are disordered; sequence VAAPAESETQNTETQNAETQNADTQNADTQNTETQNGSV. Over residues 185–202 the composition is skewed to low complexity; the sequence is AESETQNTETQNAETQNA. The segment covering 203–219 has biased composition (polar residues); it reads DTQNADTQNTETQNGSV.

Pollen.

In terms of biological role, could possibly involved in controlling pollen-specific processes such as male gamete maturation, pollen tube formation, or even fertilization. The chain is Pollen-specific protein SF3 (SF3) from Helianthus annuus (Common sunflower).